Here is a 657-residue protein sequence, read N- to C-terminus: Transketolase (657 aa).

His-31 contacts substrate. Thiamine diphosphate is bound by residues His-71 and 120–122 (GPL). Asp-158 contacts Mg(2+). Thiamine diphosphate-binding residues include Gly-159 and Asn-188. The Mg(2+) site is built by Asn-188 and Ile-190. Residues His-262, Arg-354, and Ser-381 each contribute to the substrate site. His-262 serves as a coordination point for thiamine diphosphate. Glu-408 acts as the Proton donor in catalysis. Phe-434 serves as a coordination point for thiamine diphosphate. Substrate is bound by residues His-458, Asp-466, and Arg-517.

This sequence belongs to the transketolase family. In terms of assembly, homodimer. Mg(2+) is required as a cofactor. The cofactor is Ca(2+). Mn(2+) serves as cofactor. It depends on Co(2+) as a cofactor. Requires thiamine diphosphate as cofactor.

The catalysed reaction is D-sedoheptulose 7-phosphate + D-glyceraldehyde 3-phosphate = aldehydo-D-ribose 5-phosphate + D-xylulose 5-phosphate. It functions in the pathway carbohydrate biosynthesis; Calvin cycle. The protein operates within carbohydrate degradation; pentose phosphate pathway. Its function is as follows. Catalyzes the transfer of a two-carbon ketol group from a ketose donor to an aldose acceptor, via a covalent intermediate with the cofactor thiamine pyrophosphate. The protein is Transketolase (tklB) of Cereibacter sphaeroides (Rhodobacter sphaeroides).